The sequence spans 411 residues: Adenylosuccinate synthetase (411 aa).

Residues glycine 11–lysine 17 and glycine 39–threonine 41 contribute to the GTP site. Aspartate 12 serves as the catalytic Proton acceptor. Residues aspartate 12 and glycine 39 each contribute to the Mg(2+) site. Residues aspartate 12–lysine 15, asparagine 37–histidine 40, threonine 121, arginine 135, glutamine 215, threonine 230, and arginine 294 each bind IMP. The active-site Proton donor is histidine 40. Threonine 290 to arginine 296 contributes to the substrate binding site. GTP is bound by residues arginine 296, lysine 322–aspartate 324, and serine 400–serine 402.

Belongs to the adenylosuccinate synthetase family. As to quaternary structure, homodimer. Requires Mg(2+) as cofactor.

The protein localises to the cytoplasm. It carries out the reaction IMP + L-aspartate + GTP = N(6)-(1,2-dicarboxyethyl)-AMP + GDP + phosphate + 2 H(+). Its pathway is purine metabolism; AMP biosynthesis via de novo pathway; AMP from IMP: step 1/2. Plays an important role in the de novo pathway of purine nucleotide biosynthesis. Catalyzes the first committed step in the biosynthesis of AMP from IMP. This chain is Adenylosuccinate synthetase, found in Helicobacter acinonychis (strain Sheeba).